The chain runs to 431 residues: Ornithine aminotransferase, mitochondrial (431 aa).

At Lys-286 the chain carries N6-(pyridoxal phosphate)lysine.

It belongs to the class-III pyridoxal-phosphate-dependent aminotransferase family. As to quaternary structure, homotetramer. Pyridoxal 5'-phosphate is required as a cofactor.

It is found in the mitochondrion matrix. It catalyses the reaction a 2-oxocarboxylate + L-ornithine = L-glutamate 5-semialdehyde + an L-alpha-amino acid. It functions in the pathway amino-acid biosynthesis; L-proline biosynthesis; L-glutamate 5-semialdehyde from L-ornithine: step 1/1. This is Ornithine aminotransferase, mitochondrial (Oat) from Drosophila melanogaster (Fruit fly).